The primary structure comprises 419 residues: Pregnancy-specific beta-1-glycoprotein 1 (419 aa).

An N-terminal signal peptide occupies residues 1 to 34 (MGTLSAPPCTQRIKWKGLLLTASLLNFWNLPTTA). An Ig-like V-type domain is found at 35-144 (QVTIEAEPTK…TGRFTFTLHL (110 aa)). 7 N-linked (GlcNAc...) asparagine glycosylation sites follow: N61, N104, N111, N199, N259, N268, and N303. 3 consecutive Ig-like C2-type domains span residues 149–234 (PSIS…VTLN), 240–327 (PKPY…VTLN), and 335–410 (PRIY…KSMT). C169 and C217 are disulfide-bonded. 2 disulfides stabilise this stretch: C262–C310 and C354–C394.

This sequence belongs to the immunoglobulin superfamily. CEA family.

It is found in the secreted. This Homo sapiens (Human) protein is Pregnancy-specific beta-1-glycoprotein 1 (PSG1).